We begin with the raw amino-acid sequence, 326 residues long: MYGIEYTTVLTFLISVILLNYVLKSLTRIMDFIIYRFLLIIVILSPFLNAQNYGINLPITGSMDTPYTNPTREEVFLTSTLCLYYPTEAATEINDNSWEDTLSQLFLTKGWPTGSIYFKAYTNIASFSVDPQLYCDYNLVLMKYDATLQLDMSELADLLLNEWLCNPMDITLYYYQQTDEANKWISMGSSCTIKVCPLNTQTLGIGCLTTDTNTFEEVATADKLVITDVVDGVNHKLNVTTNTCTIRNCKKLGPRENVAVIQVGGSDILDITADPTTAPQTERMMRVNWKKWWQVFYTIVDYVNQIVQAMSKRSRSLNSAAFYYRV.

A signal peptide spans 1–50 (MYGIEYTTVLTFLISVILLNYVLKSLTRIMDFIIYRFLLIIVILSPFLNA). 4 cysteine pairs are disulfide-bonded: Cys82-Cys135, Cys165-Cys249, Cys191-Cys244, and Cys196-Cys207. Asp95 serves as a coordination point for Ca(2+). A CNP motif; interaction with ITGAV/ITGB3 region spans residues 165 to 167 (CNP). Ca(2+) is bound by residues Gln177, Gly206, Thr214, Glu216, Asp228, Val229, and Asp231. An N-linked (GlcNAc...) asparagine; by host glycan is attached at Asn238. Residues 253-255 (GPR) are GPR motif; interaction with ITGAX/ITGB2. Position 301 (Asp301) interacts with Ca(2+).

This sequence belongs to the rotavirus VP7 family. Homotrimer; disulfide-linked. 2 Ca(2+) ions bound at each subunit interface in the trimer hold the trimer together. Interacts with the intermediate capsid protein VP6. Interacts with the outer capsid protein VP5*. N-glycosylated. Post-translationally, the N-terminus is blocked possibly by pyroglutamic acid.

The protein resides in the virion. It localises to the host endoplasmic reticulum lumen. Calcium-binding protein that interacts with rotavirus cell receptors once the initial attachment by VP4 has been achieved. Rotavirus attachment and entry into the host cell probably involves multiple sequential contacts between the outer capsid proteins VP4 and VP7, and the cell receptors. Following entry into the host cell, low intracellular or intravesicular Ca(2+) concentration probably causes the calcium-stabilized VP7 trimers to dissociate from the virion. This step is probably necessary for the membrane-disrupting entry step and the release of VP4, which is locked onto the virion by VP7. The polypeptide is Outer capsid glycoprotein VP7 (Rotavirus A (strain RVA/Human/Japan/YO/1977/G3P1A[8]) (RV-A)).